The following is a 197-amino-acid chain: Elongation factor Ts (197 aa).

An involved in Mg(2+) ion dislocation from EF-Tu region spans residues 81–84; that stretch reads TDFV.

This sequence belongs to the EF-Ts family.

Its subcellular location is the cytoplasm. Its function is as follows. Associates with the EF-Tu.GDP complex and induces the exchange of GDP to GTP. It remains bound to the aminoacyl-tRNA.EF-Tu.GTP complex up to the GTP hydrolysis stage on the ribosome. This Coprothermobacter proteolyticus (strain ATCC 35245 / DSM 5265 / OCM 4 / BT) protein is Elongation factor Ts.